Consider the following 204-residue polypeptide: Sec-independent protein translocase protein TatB (204 aa).

The helical transmembrane segment at 1-21 (MFDIGFSELLLIFIVGLVVLG) threads the bilayer. The segment covering 154-166 (VVSSVDSIQNGQS) has biased composition (polar residues). Positions 154–204 (VVSSVDSIQNGQSDLELDAQAEVDRQLAAMMDKYAPPDDVAENPISTEKTS) are disordered.

The protein belongs to the TatB family. In terms of assembly, the Tat system comprises two distinct complexes: a TatABC complex, containing multiple copies of TatA, TatB and TatC subunits, and a separate TatA complex, containing only TatA subunits. Substrates initially bind to the TatABC complex, which probably triggers association of the separate TatA complex to form the active translocon.

The protein localises to the cell inner membrane. Its function is as follows. Part of the twin-arginine translocation (Tat) system that transports large folded proteins containing a characteristic twin-arginine motif in their signal peptide across membranes. Together with TatC, TatB is part of a receptor directly interacting with Tat signal peptides. TatB may form an oligomeric binding site that transiently accommodates folded Tat precursor proteins before their translocation. The protein is Sec-independent protein translocase protein TatB of Mannheimia succiniciproducens (strain KCTC 0769BP / MBEL55E).